We begin with the raw amino-acid sequence, 46 residues long: Diuretic hormone class 1 (46 aa).

Ile-46 carries the isoleucine amide modification.

Its subcellular location is the secreted. Regulation of fluid secretion. Stimulates primary urine secretion by Malpighian tubules and causes a dose-dependent stimulation of cAMP levels in the tubules. Has a greater effect on the transport of Na(+) then K(+) ions. In vitro, has synergistic effects with the smaller diuretic hormone DH(31) which co-occurs with it. The protein is Diuretic hormone class 1 of Diploptera punctata (Pacific beetle cockroach).